The sequence spans 380 residues: RNA binding protein fox-1 homolog 2 (380 aa).

Polar residues-rich tracts occupy residues 1–20 and 36–56; these read MEKN…TPDT and NGLS…QSTE. Residues 1 to 117 are disordered; sequence MEKNKMVSQG…TPKRLHVSNI (117 aa). Residues 72–102 are compositionally biased toward low complexity; that stretch reads STPATSTANASSTTDGSQTEGQQSQTQNSEN. The RRM domain occupies 110–186; sequence KRLHVSNIPF…RKIEVNNATA (77 aa).

It localises to the nucleus. The protein localises to the cytoplasm. In terms of biological role, RNA-binding protein that regulates alternative splicing events by binding to 5'-UGCAUGU-3' elements. Regulates alternative splicing of tissue-specific exons. The polypeptide is RNA binding protein fox-1 homolog 2 (rbfox2) (Xenopus tropicalis (Western clawed frog)).